Reading from the N-terminus, the 344-residue chain is Phosphoribosylformylglycinamidine cyclo-ligase (344 aa).

The protein belongs to the AIR synthase family.

The protein resides in the cytoplasm. It catalyses the reaction 2-formamido-N(1)-(5-O-phospho-beta-D-ribosyl)acetamidine + ATP = 5-amino-1-(5-phospho-beta-D-ribosyl)imidazole + ADP + phosphate + H(+). It functions in the pathway purine metabolism; IMP biosynthesis via de novo pathway; 5-amino-1-(5-phospho-D-ribosyl)imidazole from N(2)-formyl-N(1)-(5-phospho-D-ribosyl)glycinamide: step 2/2. In Glaesserella parasuis serovar 5 (strain SH0165) (Haemophilus parasuis), this protein is Phosphoribosylformylglycinamidine cyclo-ligase.